Consider the following 193-residue polypeptide: Phosphoheptose isomerase (193 aa).

In terms of domain architecture, SIS spans 37–193; that stretch reads IAQSFKNEKK…LIIEKEMQKN (157 aa). 52 to 54 is a binding site for substrate; it reads NGG. Zn(2+) contacts are provided by His-61 and Glu-65. Substrate-binding positions include Glu-65, 93 to 94, 119 to 121, Ser-124, and Gln-172; these read ND and STS. Zn(2+) contacts are provided by Gln-172 and His-180.

This sequence belongs to the SIS family. GmhA subfamily. Homotetramer. Zn(2+) is required as a cofactor.

It localises to the cytoplasm. The enzyme catalyses 2 D-sedoheptulose 7-phosphate = D-glycero-alpha-D-manno-heptose 7-phosphate + D-glycero-beta-D-manno-heptose 7-phosphate. Its pathway is carbohydrate biosynthesis; D-glycero-D-manno-heptose 7-phosphate biosynthesis; D-glycero-alpha-D-manno-heptose 7-phosphate and D-glycero-beta-D-manno-heptose 7-phosphate from sedoheptulose 7-phosphate: step 1/1. Catalyzes the isomerization of sedoheptulose 7-phosphate in D-glycero-D-manno-heptose 7-phosphate. The chain is Phosphoheptose isomerase from Buchnera aphidicola subsp. Acyrthosiphon pisum (strain 5A).